A 113-amino-acid chain; its full sequence is Large ribosomal subunit protein uL24 (113 aa).

The protein belongs to the universal ribosomal protein uL24 family. Part of the 50S ribosomal subunit.

One of two assembly initiator proteins, it binds directly to the 5'-end of the 23S rRNA, where it nucleates assembly of the 50S subunit. Functionally, one of the proteins that surrounds the polypeptide exit tunnel on the outside of the subunit. This is Large ribosomal subunit protein uL24 from Synechococcus sp. (strain RCC307).